The chain runs to 261 residues: Small ribosomal subunit protein eS1 (261 aa).

Over residues 1–18 the composition is skewed to basic residues; it reads MAVGKNKRISKGKKGGKK. The disordered stretch occupies residues 1 to 22; that stretch reads MAVGKNKRISKGKKGGKKKAAD.

This sequence belongs to the eukaryotic ribosomal protein eS1 family. As to quaternary structure, component of the small ribosomal subunit. Mature ribosomes consist of a small (40S) and a large (60S) subunit. The 40S subunit contains about 33 different proteins and 1 molecule of RNA (18S). The 60S subunit contains about 49 different proteins and 3 molecules of RNA (25S, 5.8S and 5S).

It is found in the cytoplasm. The protein is Small ribosomal subunit protein eS1 of Cicer arietinum (Chickpea).